We begin with the raw amino-acid sequence, 254 residues long: RxLR effector protein CRE5 (254 aa).

The N-terminal stretch at 1-19 (MQTIQLIIFVAFVLSRAAA) is a signal peptide. An N-linked (GlcNAc...) asparagine glycan is attached at Asn49. Residues 53-63 (RSLRQHEGEDR) carry the RxLR-dEER motif. The 64-residue stretch at 191-254 (SRWLSAGVVT…MEEGGVCRAL (64 aa)) folds into the Nudix hydrolase domain. The Nudix box motif lies at 228–249 (GGWDRGEKIKKAALREVMEEGG).

In the N-terminal section; belongs to the RxLR effector family. It in the C-terminal section; belongs to the Nudix hydrolase family.

Its subcellular location is the secreted. The protein resides in the host cytoplasm. It is found in the host nucleus. It localises to the host nucleolus. Effector that is involved in host plant infection. Contributes to virulence during the early infection stage, by inhibiting plant defense responses induced by both PAMP-triggered immunity (PTI) and effector-triggered immunity (ETI). The polypeptide is RxLR effector protein CRE5 (Phytophthora infestans (strain T30-4) (Potato late blight agent)).